Here is a 282-residue protein sequence, read N- to C-terminus: 4-hydroxy-3-methylbut-2-enyl diphosphate reductase (282 aa).

Cys-12 contacts [4Fe-4S] cluster. 2 residues coordinate (2E)-4-hydroxy-3-methylbut-2-enyl diphosphate: His-40 and His-72. Residues His-40 and His-72 each coordinate dimethylallyl diphosphate. 2 residues coordinate isopentenyl diphosphate: His-40 and His-72. Residue Cys-94 coordinates [4Fe-4S] cluster. His-122 provides a ligand contact to (2E)-4-hydroxy-3-methylbut-2-enyl diphosphate. A dimethylallyl diphosphate-binding site is contributed by His-122. His-122 is a binding site for isopentenyl diphosphate. Residue Glu-124 is the Proton donor of the active site. Thr-160 provides a ligand contact to (2E)-4-hydroxy-3-methylbut-2-enyl diphosphate. A [4Fe-4S] cluster-binding site is contributed by Cys-188. Residues Ser-216, Asn-218, and Ser-260 each coordinate (2E)-4-hydroxy-3-methylbut-2-enyl diphosphate. Residues Ser-216, Asn-218, and Ser-260 each contribute to the dimethylallyl diphosphate site. Positions 216, 218, and 260 each coordinate isopentenyl diphosphate.

Belongs to the IspH family. Requires [4Fe-4S] cluster as cofactor.

The enzyme catalyses isopentenyl diphosphate + 2 oxidized [2Fe-2S]-[ferredoxin] + H2O = (2E)-4-hydroxy-3-methylbut-2-enyl diphosphate + 2 reduced [2Fe-2S]-[ferredoxin] + 2 H(+). It catalyses the reaction dimethylallyl diphosphate + 2 oxidized [2Fe-2S]-[ferredoxin] + H2O = (2E)-4-hydroxy-3-methylbut-2-enyl diphosphate + 2 reduced [2Fe-2S]-[ferredoxin] + 2 H(+). It participates in isoprenoid biosynthesis; dimethylallyl diphosphate biosynthesis; dimethylallyl diphosphate from (2E)-4-hydroxy-3-methylbutenyl diphosphate: step 1/1. It functions in the pathway isoprenoid biosynthesis; isopentenyl diphosphate biosynthesis via DXP pathway; isopentenyl diphosphate from 1-deoxy-D-xylulose 5-phosphate: step 6/6. Functionally, catalyzes the conversion of 1-hydroxy-2-methyl-2-(E)-butenyl 4-diphosphate (HMBPP) into a mixture of isopentenyl diphosphate (IPP) and dimethylallyl diphosphate (DMAPP). Acts in the terminal step of the DOXP/MEP pathway for isoprenoid precursor biosynthesis. This is 4-hydroxy-3-methylbut-2-enyl diphosphate reductase from Geotalea daltonii (strain DSM 22248 / JCM 15807 / FRC-32) (Geobacter daltonii).